We begin with the raw amino-acid sequence, 279 residues long: Tryptophan synthase alpha chain (279 aa).

Residues Glu50 and Asp61 each act as proton acceptor in the active site.

It belongs to the TrpA family. Tetramer of two alpha and two beta chains.

The catalysed reaction is (1S,2R)-1-C-(indol-3-yl)glycerol 3-phosphate + L-serine = D-glyceraldehyde 3-phosphate + L-tryptophan + H2O. It functions in the pathway amino-acid biosynthesis; L-tryptophan biosynthesis; L-tryptophan from chorismate: step 5/5. Functionally, the alpha subunit is responsible for the aldol cleavage of indoleglycerol phosphate to indole and glyceraldehyde 3-phosphate. The sequence is that of Tryptophan synthase alpha chain from Brucella melitensis biotype 2 (strain ATCC 23457).